Consider the following 307-residue polypeptide: Fructokinase (307 aa).

Belongs to the carbohydrate kinase PfkB family.

It carries out the reaction D-fructose + ATP = D-fructose 6-phosphate + ADP + H(+). The sequence is that of Fructokinase (cscK) from Escherichia coli.